Here is a 317-residue protein sequence, read N- to C-terminus: Porphobilinogen deaminase (317 aa).

An S-(dipyrrolylmethanemethyl)cysteine modification is found at Cys-240.

Belongs to the HMBS family. In terms of assembly, monomer. Requires dipyrromethane as cofactor.

It catalyses the reaction 4 porphobilinogen + H2O = hydroxymethylbilane + 4 NH4(+). It participates in porphyrin-containing compound metabolism; protoporphyrin-IX biosynthesis; coproporphyrinogen-III from 5-aminolevulinate: step 2/4. In terms of biological role, tetrapolymerization of the monopyrrole PBG into the hydroxymethylbilane pre-uroporphyrinogen in several discrete steps. The polypeptide is Porphobilinogen deaminase (Nitratidesulfovibrio vulgaris (strain DSM 19637 / Miyazaki F) (Desulfovibrio vulgaris)).